A 154-amino-acid chain; its full sequence is 17.7 kDa class I heat shock protein (154 aa).

A sHSP domain is found at 40 to 154 (ETSAFANTRI…PDVKSIEISG (115 aa)).

The protein belongs to the small heat shock protein (HSP20) family. In terms of assembly, forms oligomeric structures.

Its subcellular location is the cytoplasm. This Solanum peruvianum (Peruvian tomato) protein is 17.7 kDa class I heat shock protein.